A 253-amino-acid chain; its full sequence is 5-oxoprolinase subunit A (253 aa).

The protein belongs to the LamB/PxpA family. In terms of assembly, forms a complex composed of PxpA, PxpB and PxpC.

It catalyses the reaction 5-oxo-L-proline + ATP + 2 H2O = L-glutamate + ADP + phosphate + H(+). Its function is as follows. Catalyzes the cleavage of 5-oxoproline to form L-glutamate coupled to the hydrolysis of ATP to ADP and inorganic phosphate. This is 5-oxoprolinase subunit A from Shouchella clausii (strain KSM-K16) (Alkalihalobacillus clausii).